The following is a 1007-amino-acid chain: MKLSSACAIALLAAQAAGASIKHRINGFTLTEHSDPAKRELLQKYVTWDDKSLFINGERIMIFSGEFHPFRLPVKELQLDIFQKVKALGFNCVSFYVDWALVEGEPGEYRADGIFDLEPFFDAASEAGIYLLARPGPYINAESSGGGFPGWLQRVNGTLRSSDKAYLDATDNYVSHVAATIAKYQITNGGPIILYQPENEYTSGCCGVEFPDPVYMQYVEDQARNAGVVIPLINNDASASGNNAPGTGKGAVDIYGHDSYPLGFDCANPTVWPSGDLPTNFRTLHLEQSPTTPYAIVEFQGGSYDPWGGPGFAACSELLNNEFERVSYKNDFSFQIAIMNLYMIFGGTNWGNLGYPNGYTSYDYGSAVTESRNITREKYSELKLLGNFAKVSPGYLTASPGNLTTSGYADTTDLTVTPLLGNSTGSFFVVRHSDYSSEESTSYKLRLPTSASSVTIPQLGGTLTLNGRDSKIHVTDYNVSGTNIIYSTAEVFTWKKFADGKVLVLYGGAGEHHELAISTKSNVTVIEGSESGISSKQTSSSVVVGWDVSTTRRIIQVGDLKILLLDRNSAYNYWVPQLATDGTSPGFSTPEKVASSIIVKAGYLVRTAYLKGSGLYLTADFNATTSVEVIGVPSTAKNLFINGDKTSHTVDKNGIWSATVDYNAPDISLPSLKDLDWKYVDTLPEIQSSYDDSLWPAADLKQTKNTLRSLTTPTSLYSSDYGFHTGYLLYRGHFTATGNESTFAIDTQGGSAFGSSVWLNGTYLGSWTGLYANSDYNATYNLPQLQAGKTYVITVVINNMGLEENWTVGEDLMKTPRGILNFLLAGRPSSAISWKLTGNLGGEDYEDKVRGPLNEGGLYAERQGFHQPEPPSQDWKSSSPLEGLSEAGIGFYSASFDLDLPKGWDVPLFLNIGNSTTPSPYRVQVYVNGYQYAKYISNIGPQTSFPVPEGILNYRGTNWLAVTLWALDSAGGKLESLELSYTTPVLTALGEVESVDQPKYKKRKGAY.

Residues 1-18 (MKLSSACAIALLAAQAAG) form the signal peptide. Tyr-96, Asn-140, Ala-141, and Glu-142 together coordinate substrate. Asn-156 carries N-linked (GlcNAc...) asparagine glycosylation. Asn-199 is a substrate binding site. The active-site Proton donor is Glu-200. Residues Cys-205 and Cys-206 are joined by a disulfide bond. Tyr-260 contributes to the substrate binding site. Residues Cys-266 and Cys-315 are joined by a disulfide bond. Glu-298 serves as the catalytic Nucleophile. Tyr-364 is a substrate binding site. Residues Asn-373, Asn-402, Asn-422, Asn-478, Asn-522, Asn-622, Asn-739, Asn-760, Asn-777, and Asn-805 are each glycosylated (N-linked (GlcNAc...) asparagine). The disordered stretch occupies residues 862 to 881 (RQGFHQPEPPSQDWKSSSPL). Asn-914 carries N-linked (GlcNAc...) asparagine glycosylation.

This sequence belongs to the glycosyl hydrolase 35 family.

The protein localises to the secreted. The enzyme catalyses Hydrolysis of terminal non-reducing beta-D-galactose residues in beta-D-galactosides.. Its function is as follows. Cleaves beta-linked terminal galactosyl residues from gangliosides, glycoproteins, and glycosaminoglycans. This Aspergillus phoenicis (Aspergillus saitoi) protein is Probable beta-galactosidase A (lacA).